The following is a 237-amino-acid chain: Phosphoribosylaminoimidazole-succinocarboxamide synthase (237 aa).

Belongs to the SAICAR synthetase family.

The catalysed reaction is 5-amino-1-(5-phospho-D-ribosyl)imidazole-4-carboxylate + L-aspartate + ATP = (2S)-2-[5-amino-1-(5-phospho-beta-D-ribosyl)imidazole-4-carboxamido]succinate + ADP + phosphate + 2 H(+). Its pathway is purine metabolism; IMP biosynthesis via de novo pathway; 5-amino-1-(5-phospho-D-ribosyl)imidazole-4-carboxamide from 5-amino-1-(5-phospho-D-ribosyl)imidazole-4-carboxylate: step 1/2. The protein is Phosphoribosylaminoimidazole-succinocarboxamide synthase of Deinococcus radiodurans (strain ATCC 13939 / DSM 20539 / JCM 16871 / CCUG 27074 / LMG 4051 / NBRC 15346 / NCIMB 9279 / VKM B-1422 / R1).